Here is a 442-residue protein sequence, read N- to C-terminus: F-box/FBD/LRR-repeat protein At2g26030 (442 aa).

In terms of domain architecture, F-box spans 3–49 (CDRICELPDSLLTQVLSYLPTIDSVKTSVLSKRWEFLWLRVPVLDLK). 6 LRR repeats span residues 128–160 (CNTL…HLED), 162–187 (WYYD…VLIR), 188–214 (PIDF…RLTF), 234–260 (YLNF…DIDS), 278–309 (KRDI…DRYS), and 324–352 (QAAV…ILDF). The FBD domain maps to 358–410 (PEQDGLTYVPQCLLSSLECVEIRELIMGEETGEKLVRYFLKNSVVLKKLILRL).

The polypeptide is F-box/FBD/LRR-repeat protein At2g26030 (Arabidopsis thaliana (Mouse-ear cress)).